We begin with the raw amino-acid sequence, 913 residues long: Protein SEY1 homolog (913 aa).

At M1 to N825 the chain is on the cytoplasmic side. Positions G33 to C288 constitute a GB1/RHD3-type G domain. Position 43 to 50 (G43 to S50) interacts with GTP. A helical membrane pass occupies residues V826–T846. Residues R847–F849 are Lumenal-facing. A helical membrane pass occupies residues F850–L870. The Cytoplasmic segment spans residues Y871–E913.

The protein belongs to the TRAFAC class dynamin-like GTPase superfamily. GB1/RHD3 GTPase family. RHD3 subfamily.

The protein localises to the endoplasmic reticulum membrane. Its function is as follows. Probable GTP-binding protein involved in generating and maintaining the structure of the tubular endoplasmic reticulum network. The chain is Protein SEY1 homolog from Plasmodium berghei (strain Anka).